The following is a 255-amino-acid chain: uncharacterized protein (255 aa).

A signal peptide spans 1-23; sequence MKRLNKLVLGIIFLFLVISITAG. The N-palmitoyl cysteine moiety is linked to residue cysteine 24. The S-diacylglycerol cysteine moiety is linked to residue cysteine 24.

The protein belongs to the staphylococcal tandem lipoprotein family.

The protein resides in the cell membrane. This is an uncharacterized protein from Staphylococcus aureus (strain USA300).